Here is a 374-residue protein sequence, read N- to C-terminus: Pre-B-cell leukemia transcription factor 4 (374 aa).

The PBC domain maps to proline 14–aspartate 209. Positions aspartate 21–glycine 100 are PBC-A. Residues glycine 103–aspartate 209 form a PBC-B region. Residues alanine 210 to methionine 272 constitute a DNA-binding region (homeobox; TALE-type). The disordered stretch occupies residues glutamine 333–asparagine 374. Polar residues predominate over residues leucine 341 to threonine 358.

Belongs to the TALE/PBX homeobox family.

It is found in the nucleus. The sequence is that of Pre-B-cell leukemia transcription factor 4 (PBX4) from Homo sapiens (Human).